A 338-amino-acid chain; its full sequence is RNA 3'-terminal phosphate cyclase (338 aa).

Residues Q103 and 283-287 (YLADQ) contribute to the ATP site. H308 functions as the Tele-AMP-histidine intermediate in the catalytic mechanism.

Belongs to the RNA 3'-terminal cyclase family. Type 1 subfamily.

Its subcellular location is the cytoplasm. It carries out the reaction a 3'-end 3'-phospho-ribonucleotide-RNA + ATP = a 3'-end 2',3'-cyclophospho-ribonucleotide-RNA + AMP + diphosphate. Functionally, catalyzes the conversion of 3'-phosphate to a 2',3'-cyclic phosphodiester at the end of RNA. The mechanism of action of the enzyme occurs in 3 steps: (A) adenylation of the enzyme by ATP; (B) transfer of adenylate to an RNA-N3'P to produce RNA-N3'PP5'A; (C) and attack of the adjacent 2'-hydroxyl on the 3'-phosphorus in the diester linkage to produce the cyclic end product. The biological role of this enzyme is unknown but it is likely to function in some aspects of cellular RNA processing. This Escherichia coli (strain SMS-3-5 / SECEC) protein is RNA 3'-terminal phosphate cyclase.